A 197-amino-acid chain; its full sequence is Lymphotoxin-alpha (197 aa).

A signal peptide spans 1-26 (MTPPGRLYLPLLLGLLLAPPPPGAQG). Residues 55-197 (PAAHLVGDPS…SSVFFGAFAL (143 aa)) form the THD domain. Asparagine 88 carries an N-linked (GlcNAc...) asparagine glycan. A disulfide bridge connects residues cysteine 112 and cysteine 148.

This sequence belongs to the tumor necrosis factor family. In terms of assembly, homotrimer, and heterotrimer of either two LTB and one LTA subunits or (less prevalent) two LTA and one LTB subunits. Interacts with TNFRSF14.

It localises to the secreted. Its subcellular location is the membrane. Its function is as follows. Cytokine that in its homotrimeric form binds to TNFRSF1A/TNFR1, TNFRSF1B/TNFBR and TNFRSF14/HVEM. In its heterotrimeric form with LTB binds to TNFRSF3/LTBR. Lymphotoxin is produced by lymphocytes and is cytotoxic for a wide range of tumor cells in vitro and in vivo. This chain is Lymphotoxin-alpha (LTA), found in Oryctolagus cuniculus (Rabbit).